The primary structure comprises 207 residues: Nudix hydrolase 4 (207 aa).

A Nudix hydrolase domain is found at 58 to 194; the sequence is GYRQVVGCVP…WMREALEAFI (137 aa). The short motif at 101 to 122 is the Nudix box element; that stretch reads GGWETDESMEEAALRETIEEAG. Mg(2+)-binding residues include glutamate 116 and glutamate 120.

Belongs to the Nudix hydrolase family. Mg(2+) is required as a cofactor. The cofactor is Mn(2+). Expressed in roots, stems and leaves.

The enzyme catalyses ADP-D-ribose + H2O = D-ribose 5-phosphate + AMP + 2 H(+). The catalysed reaction is NAD(+) + H2O = beta-nicotinamide D-ribonucleotide + AMP + 2 H(+). It catalyses the reaction NADH + H2O = reduced beta-nicotinamide D-ribonucleotide + AMP + 2 H(+). Probably mediates the hydrolysis of some nucleoside diphosphate derivatives. In vitro, it can use both NADH and ADP-ribose as substrates; however the relevance of such substrates in vivo is unclear. The protein is Nudix hydrolase 4 (NUDT4) of Arabidopsis thaliana (Mouse-ear cress).